We begin with the raw amino-acid sequence, 399 residues long: Methylthioribose kinase (399 aa).

ATP contacts are provided by residues N40, K57, and 111–113 (EDL). D229 provides a ligand contact to substrate. 246 to 248 (DAE) contacts ATP. R344 contacts substrate.

This sequence belongs to the methylthioribose kinase family. Homodimer.

The catalysed reaction is 5-(methylsulfanyl)-D-ribose + ATP = 5-(methylsulfanyl)-alpha-D-ribose 1-phosphate + ADP + H(+). It participates in amino-acid biosynthesis; L-methionine biosynthesis via salvage pathway; S-methyl-5-thio-alpha-D-ribose 1-phosphate from S-methyl-5'-thioadenosine (hydrolase route): step 2/2. Functionally, catalyzes the phosphorylation of methylthioribose into methylthioribose-1-phosphate. The polypeptide is Methylthioribose kinase (Yersinia enterocolitica serotype O:8 / biotype 1B (strain NCTC 13174 / 8081)).